The primary structure comprises 174 residues: Adenylate kinase (174 aa).

The NMP stretch occupies residues 12-41; it reads STGDMLRAAIKAGTPLGLEAKKIIDEGGLV. Residues T13, R18, 39–41, 67–70, and Q74 contribute to the AMP site; these read GLV and GFPR. The tract at residues 104 to 141 is LID; that stretch reads GRRVHLASGRTYHIAYNPPKVEGKDDVTGEDLIQRDDD. Residues R105 and 114 to 115 each bind ATP; that span reads TY. Residues R138 and R149 each coordinate AMP.

It belongs to the adenylate kinase family. Monomer.

Its subcellular location is the cytoplasm. The enzyme catalyses AMP + ATP = 2 ADP. It functions in the pathway purine metabolism; AMP biosynthesis via salvage pathway; AMP from ADP: step 1/1. Catalyzes the reversible transfer of the terminal phosphate group between ATP and AMP. Plays an important role in cellular energy homeostasis and in adenine nucleotide metabolism. This chain is Adenylate kinase, found in Neisseria animalis.